The primary structure comprises 933 residues: Phospholipase SGR2 (933 aa).

The segment covering 1–14 (MEDRETHLGTREVN) has biased composition (basic and acidic residues). Residues 1-22 (MEDRETHLGTREVNETSPDLLK) are disordered. The active site involves serine 444. Disordered stretches follow at residues 475–517 (PDEE…GQDN) and 553–598 (RGGQ…ESVN). The span at 505–517 (QLNNPEKITGQDN) shows a compositional bias: polar residues. Residues 553-563 (RGGQEDDHHDS) are compositionally biased toward basic and acidic residues. A coiled-coil region spans residues 593–631 (DKESVNSNNEERIKLLQDEVNSLRSKVAQLLSENARILS). Positions 669–868 (LEFKVDTFFA…ALFIIKHLYR (200 aa)) constitute a DDHD domain. Residues 871 to 903 (PDGPNSPTESTEGDDSPKDSSRPHSWIDRREAD) form a disordered region. Basic and acidic residues predominate over residues 885 to 902 (DSPKDSSRPHSWIDRREA).

Forms oligomers. In terms of tissue distribution, expressed in roots, hypocotyls, leaves, stems and floral buds, and, at low levels, in siliques.

The protein resides in the vacuole membrane. In terms of biological role, involved in vacuolar formation or function (e.g. formation of vacuolar membrane 'bulbs'). Required for amyloplast sedimentation in the endodermis during shoot gravitropism, which are thus acting as statoliths. Particularly important for the negative gravitropism leading to leaf movement observed in darkness. The sequence is that of Phospholipase SGR2 (SGR2) from Arabidopsis thaliana (Mouse-ear cress).